The following is a 115-amino-acid chain: Protein V2 (115 aa).

It belongs to the geminiviridae protein AV2/V2 family. As to quaternary structure, interacts with host SGS3.

The protein localises to the host cytoplasm. It is found in the host perinuclear region. Its function is as follows. Through its interaction with host SGS3, acts as a suppressor of RNA-mediated gene silencing, also known as post-transcriptional gene silencing (PTGS), a mechanism of plant viral defense that limits the accumulation of viral RNAs. The polypeptide is Protein V2 (Cynanchum acutum (Little mallow)).